The following is a 194-amino-acid chain: Large ribosomal subunit protein uL24c (194 aa).

Residues 1–50 (MVAMAMASLQSSMSSLSLSSNSFLGQPLSPITLSPFLQGKPTEKKCLIVM) constitute a chloroplast transit peptide.

Belongs to the universal ribosomal protein uL24 family. Part of the 50S ribosomal subunit.

The protein resides in the plastid. Its subcellular location is the chloroplast. Its function is as follows. One of two assembly initiator proteins, it binds directly to the 5'-end of the 23S rRNA, where it nucleates assembly of the 50S subunit. The protein is Large ribosomal subunit protein uL24c (RPL24) of Pisum sativum (Garden pea).